We begin with the raw amino-acid sequence, 555 residues long: Protein PLASTID TRANSCRIPTIONALLY ACTIVE 12, chloroplastic (555 aa).

The transit peptide at 1 to 58 directs the protein to the chloroplast; that stretch reads MASCYNPWRLFPGMSTAVPAGPVTAPAHSRTCKSSKVFSALPHRRGLLFLGTRRARIK. 3 disordered regions span residues 80 to 100, 115 to 167, and 468 to 541; these read YFDSTSGQLEPASGARASIPG, ARAP…EPDV, and SYNE…IDDS. Polar residues predominate over residues 144–154; it reads QVTSASGTEGA. Composition is skewed to acidic residues over residues 471–480 and 490–502; these read EDSDDEDEDV and LEDEEDDRDDVAE. Polar residues predominate over residues 508-519; the sequence is NQNWSALKSTGQ. Residues 521 to 538 are compositionally biased toward basic and acidic residues; it reads EKPKEKSKKDEMTLKEAI.

Component of the plastid-encoded plastid RNA polymerase (PEP) complex.

It localises to the plastid. It is found in the chloroplast stroma. The protein resides in the nucleus. Its function is as follows. Required for the activity of the plastid-encoded RNA polymerase (PEP) and full expression of genes transcribed by PEP. Required for the proper build-up and formation of the PEP-complex. Binds single-stranded (ss) DNA and RNA, but not double-stranded (ds) DNA. This Zea mays (Maize) protein is Protein PLASTID TRANSCRIPTIONALLY ACTIVE 12, chloroplastic.